Reading from the N-terminus, the 270-residue chain is Imidazole glycerol phosphate synthase subunit HisF (270 aa).

Catalysis depends on residues D11 and D130.

It belongs to the HisA/HisF family. As to quaternary structure, heterodimer of HisH and HisF.

It is found in the cytoplasm. It catalyses the reaction 5-[(5-phospho-1-deoxy-D-ribulos-1-ylimino)methylamino]-1-(5-phospho-beta-D-ribosyl)imidazole-4-carboxamide + L-glutamine = D-erythro-1-(imidazol-4-yl)glycerol 3-phosphate + 5-amino-1-(5-phospho-beta-D-ribosyl)imidazole-4-carboxamide + L-glutamate + H(+). It participates in amino-acid biosynthesis; L-histidine biosynthesis; L-histidine from 5-phospho-alpha-D-ribose 1-diphosphate: step 5/9. Functionally, IGPS catalyzes the conversion of PRFAR and glutamine to IGP, AICAR and glutamate. The HisF subunit catalyzes the cyclization activity that produces IGP and AICAR from PRFAR using the ammonia provided by the HisH subunit. The chain is Imidazole glycerol phosphate synthase subunit HisF from Chloroflexus aggregans (strain MD-66 / DSM 9485).